The following is a 912-amino-acid chain: MAGKARVHELAKELGVTSKEVLARLSDQGEFVKSASSTVEAPVARRLRESFGGGDKPAPAASNGAAAEAAAPPKKAGPKPGAPKPAPKKVAEPVVEAPVAPEPPAAPAAPAAPAPKPSPAARPAAAEAAAPAPAPAPAPRPGATPGPKPGAPRVPRVGNNPFSSAQPAERPAPRPQAPRPGAPRPGGASPSNMPPRPSPGSMGPRPPRPGGGPRPGGGPRPGGAGRPGGGGGGNYRGGGTGTGAPAGGPPGAGGGFRGRPGGGGGGGRPGQRGGAAGAFGRPGGAPKRGRKSKRAKRAEYENMQAPVVGGVRLPHGNGEVIRLARGASLSDFAEKIDANPASLVQALFNLGEMVTATQSVGDETLELLGGEMNYVVQVVSPEDEDRELLESFDLTYGEDEGGEEDLRTRPPVVTVMGHVDHGKTRLLDTIRKANVREGEAGGITQHIGAYQVAVEHDGTERPITFIDTPGHEAFTAMRARGAKATDIAILVVAADDGVMPQTVEAINHAQAADVPIVVAVNKIDKEGADPAKIRAQLTEYNLVAEDFGGDTMFVDISARQGTNIEQLLEAVLLTADAALDLRANPDMEAQGVAIEAHLDRGRGPVATVLIQRGTLRVGDSIVAGDAYGRVRRMVDEHGEDVEEALPSRPVQVIGFTSVPGAGDNLLVVDEDRIARQIADRRSARKRNALAARSRKRISLDDLDAALKETSQLNLILKGDNAGTVEALEEALLGIAIDDEVQLRVIDRGVGGVTETNVNLASASDAIIIGFNVRAEGKATELANREGVDIRYYSVIYQAIDEIESALKGMLKPVYEEVELGRAEIRAMFRSSKVGNIAGCLVTSGIIRRNAKARLLRDNIVVAETVTISSLRREKDDVVEVRDGYECGLTLTYNDIKEGDVIEAYELREKERV.

Residues 26-297 form a disordered region; the sequence is SDQGEFVKSA…RGRKSKRAKR (272 aa). The span at 56 to 74 shows a compositional bias: low complexity; sequence KPAPAASNGAAAEAAAPPK. Positions 100–120 are enriched in pro residues; the sequence is APEPPAAPAAPAAPAPKPSPA. Residues 121–131 are compositionally biased toward low complexity; the sequence is ARPAAAEAAAP. Pro residues-rich tracts occupy residues 132–152, 173–183, and 192–218; these read APAP…PGAP, PRPQAPRPGAP, and NMPP…PGGG. The segment covering 219-283 has biased composition (gly residues); it reads PRPGGAGRPG…GAAGAFGRPG (65 aa). Basic residues predominate over residues 287–296; it reads KRGRKSKRAK. One can recognise a tr-type G domain in the interval 408–579; that stretch reads TRPPVVTVMG…AVLLTADAAL (172 aa). Positions 417 to 424 are G1; sequence GHVDHGKT. 417–424 is a GTP binding site; sequence GHVDHGKT. The G2 stretch occupies residues 442–446; that stretch reads GITQH. Residues 467-470 form a G3 region; that stretch reads DTPG. Residues 467–471 and 521–524 contribute to the GTP site; these read DTPGH and NKID. Residues 521 to 524 form a G4 region; it reads NKID. A G5 region spans residues 557–559; sequence SAR.

Belongs to the TRAFAC class translation factor GTPase superfamily. Classic translation factor GTPase family. IF-2 subfamily.

It is found in the cytoplasm. One of the essential components for the initiation of protein synthesis. Protects formylmethionyl-tRNA from spontaneous hydrolysis and promotes its binding to the 30S ribosomal subunits. Also involved in the hydrolysis of GTP during the formation of the 70S ribosomal complex. The chain is Translation initiation factor IF-2 from Mycobacteroides abscessus (strain ATCC 19977 / DSM 44196 / CCUG 20993 / CIP 104536 / JCM 13569 / NCTC 13031 / TMC 1543 / L948) (Mycobacterium abscessus).